The following is a 287-amino-acid chain: Phospholipid phosphatase 2 (287 aa).

The Cytoplasmic portion of the chain corresponds to 1–4; it reads MERR. The chain crosses the membrane as a helical span at residues 5 to 25; the sequence is WVFVLLDVLCVLVAALPCAIL. Residues 26 to 51 are Lumenal-facing; the sequence is TFVNTPYKRGFYCGDDSIRYPYRPDT. The chain crosses the membrane as a helical span at residues 52–72; sequence ITHGLMAGVIITATVILVSAG. Topologically, residues 73–87 are cytoplasmic; that stretch reads EAYLVYTDRLYSRSD. A helical membrane pass occupies residues 88–108; it reads FNNYLAALYKVVGTFLFGAAV. The Lumenal portion of the chain corresponds to 109-161; sequence SQSLTDLAKYMTGRLRPNFLAVCDPDWSRVNCSAYVQVEVCRGSSANVTESRL. Residues 117–125 form a phosphatase sequence motif I region; sequence KYMTGRLRP. N-linked (GlcNAc...) asparagine glycans are attached at residues Asn-139 and Asn-155. A helical transmembrane segment spans residues 162-182; that stretch reads SFYSGHSSFGMYCMVFLALYV. Positions 164–167 are phosphatase sequence motif II; that stretch reads YSGH. His-167 serves as the catalytic Proton donors. Over 183–193 the chain is Cytoplasmic; sequence QARLCWKWARL. The helical transmembrane segment at 194-211 threads the bilayer; sequence LRPTVQFFLVAFALYVGY. Residues 212-218 lie on the Lumenal side of the membrane; that stretch reads TRVSDHK. Residues 212–223 form a phosphatase sequence motif III region; that stretch reads TRVSDHKHHWSD. The active-site Nucleophile is His-219. The chain crosses the membrane as a helical span at residues 219–239; it reads HHWSDVLVGLLQGALVASLTV. The Cytoplasmic segment spans residues 240–287; that stretch reads RYISDFFKARPPQHCPEEEDLERKPSLSLTLALGETDCNHYGYPVSSS.

The protein belongs to the PA-phosphatase related phosphoesterase family. Forms functional homodimers and homooligomers. Can also form heterooligomers with PLPP1 and PLPP3. In terms of processing, N-glycosylated.

Its subcellular location is the membrane. The protein localises to the cell membrane. It localises to the early endosome membrane. It is found in the endoplasmic reticulum membrane. The enzyme catalyses a 1,2-diacyl-sn-glycero-3-phosphate + H2O = a 1,2-diacyl-sn-glycerol + phosphate. It catalyses the reaction 1,2-dihexadecanoyl-sn-glycero-3-phosphate + H2O = 1,2-dihexadecanoyl-sn-glycerol + phosphate. The catalysed reaction is 1,2-di-(9Z-octadecenoyl)-sn-glycero-3-phosphate + H2O = 1,2-di-(9Z-octadecenoyl)-sn-glycerol + phosphate. It carries out the reaction a monoacyl-sn-glycero-3-phosphate + H2O = a monoacylglycerol + phosphate. The enzyme catalyses (9Z)-octadecenoyl-sn-glycero-3-phosphate + H2O = (9Z-octadecenoyl)-glycerol + phosphate. It catalyses the reaction sphing-4-enine 1-phosphate + H2O = sphing-4-enine + phosphate. The catalysed reaction is an N-acylsphing-4-enine 1-phosphate + H2O = an N-acylsphing-4-enine + phosphate. It carries out the reaction N-(octanoyl)-sphing-4-enine-1-phosphate + H2O = N-octanoylsphing-4-enine + phosphate. The enzyme catalyses N-(9Z-octadecenoyl)-ethanolamine phosphate + H2O = N-(9Z-octadecenoyl) ethanolamine + phosphate. The protein operates within lipid metabolism; phospholipid metabolism. Its activity is regulated as follows. Magnesium-independent phospholipid phosphatase. Insensitive to N-ethylmaleimide. Magnesium-independent phospholipid phosphatase that catalyzes the dephosphorylation of a variety of glycerolipid and sphingolipid phosphate esters including phosphatidate/PA, lysophosphatidate/LPA, sphingosine 1-phosphate/S1P and ceramide 1-phosphate/C1P. Has no apparent extracellular phosphatase activity and therefore most probably acts intracellularly. Also acts on N-oleoyl ethanolamine phosphate/N-(9Z-octadecenoyl)-ethanolamine phosphate, a potential physiological compound. Through dephosphorylation of these bioactive lipid mediators produces new bioactive compounds and may regulate signal transduction in different cellular processes. Indirectly regulates, for instance, cell cycle G1/S phase transition through its phospholipid phosphatase activity. The protein is Phospholipid phosphatase 2 of Bos taurus (Bovine).